Reading from the N-terminus, the 399-residue chain is Tryptophan synthase beta chain (399 aa).

Residue lysine 92 is modified to N6-(pyridoxal phosphate)lysine.

This sequence belongs to the TrpB family. In terms of assembly, tetramer of two alpha and two beta chains. The cofactor is pyridoxal 5'-phosphate.

The enzyme catalyses (1S,2R)-1-C-(indol-3-yl)glycerol 3-phosphate + L-serine = D-glyceraldehyde 3-phosphate + L-tryptophan + H2O. Its pathway is amino-acid biosynthesis; L-tryptophan biosynthesis; L-tryptophan from chorismate: step 5/5. The beta subunit is responsible for the synthesis of L-tryptophan from indole and L-serine. The polypeptide is Tryptophan synthase beta chain (Bordetella pertussis (strain Tohama I / ATCC BAA-589 / NCTC 13251)).